Consider the following 441-residue polypeptide: Tubulin beta chain, nucleomorph (441 aa).

Residues glutamine 11, glutamate 69, serine 138, glycine 142, threonine 143, glycine 144, asparagine 204, and asparagine 226 each coordinate GTP. Glutamate 69 contacts Mg(2+).

The protein belongs to the tubulin family. Dimer of alpha and beta chains. A typical microtubule is a hollow water-filled tube with an outer diameter of 25 nm and an inner diameter of 15 nM. Alpha-beta heterodimers associate head-to-tail to form protofilaments running lengthwise along the microtubule wall with the beta-tubulin subunit facing the microtubule plus end conferring a structural polarity. Microtubules usually have 13 protofilaments but different protofilament numbers can be found in some organisms and specialized cells. Requires Mg(2+) as cofactor.

Functionally, tubulin is the major constituent of microtubules, a cylinder consisting of laterally associated linear protofilaments composed of alpha- and beta-tubulin heterodimers. Microtubules grow by the addition of GTP-tubulin dimers to the microtubule end, where a stabilizing cap forms. Below the cap, tubulin dimers are in GDP-bound state, owing to GTPase activity of alpha-tubulin. This chain is Tubulin beta chain, nucleomorph (tubB), found in Guillardia theta (Cryptophyte).